The sequence spans 520 residues: GMP synthase [glutamine-hydrolyzing] (520 aa).

The Glutamine amidotransferase type-1 domain maps to 9–202 (HVLIVDFGSQ…THKIAGLKGD (194 aa)). The active-site Nucleophile is the Cys86. Active-site residues include His176 and Glu178. The GMPS ATP-PPase domain maps to 203-395 (WTMKAFREEA…LGLPPQFVGR (193 aa)). ATP is bound at residue 230-236 (SGGVDSS).

In terms of assembly, homodimer.

It carries out the reaction XMP + L-glutamine + ATP + H2O = GMP + L-glutamate + AMP + diphosphate + 2 H(+). The protein operates within purine metabolism; GMP biosynthesis; GMP from XMP (L-Gln route): step 1/1. In terms of biological role, catalyzes the synthesis of GMP from XMP. This Phenylobacterium zucineum (strain HLK1) protein is GMP synthase [glutamine-hydrolyzing].